Here is a 281-residue protein sequence, read N- to C-terminus: Probable feruloyl esterase A (281 aa).

The signal sequence occupies residues 1–21; it reads MKNFVSMHAILLACSAGAGLA. 3 cysteine pairs are disulfide-bonded: cysteine 50-cysteine 279, cysteine 112-cysteine 115, and cysteine 248-cysteine 255. Residue aspartate 98 coordinates substrate. A glycan (N-linked (GlcNAc...) asparagine) is linked at asparagine 100. Residue tyrosine 101 participates in substrate binding. Residue serine 154 is the Nucleophile of the active site. Asparagine 173 is a glycosylation site (N-linked (GlcNAc...) asparagine). Catalysis depends on aspartate 215, which acts as the Charge relay system. Histidine 268 is a substrate binding site. Histidine 268 acts as the Charge relay system in catalysis.

Belongs to the AB hydrolase superfamily. FaeA family.

The protein localises to the secreted. The enzyme catalyses feruloyl-polysaccharide + H2O = ferulate + polysaccharide.. Involved in degradation of plant cell walls. Hydrolyzes the feruloyl-arabinose ester bond in arabinoxylans, and the feruloyl-galactose ester bond in pectin. The sequence is that of Probable feruloyl esterase A (faeA) from Aspergillus flavus (strain ATCC 200026 / FGSC A1120 / IAM 13836 / NRRL 3357 / JCM 12722 / SRRC 167).